Here is a 638-residue protein sequence, read N- to C-terminus: Signal recognition particle receptor subunit alpha (638 aa).

Disordered stretches follow at residues 129 to 205 (KIRA…VELS), 218 to 245 (IQKHGRGLEKSSKSTKSDAPKEKGKKAP), and 262 to 315 (SAPT…ATKG). Composition is skewed to basic and acidic residues over residues 137–146 (KKFEDSEKAK) and 153–165 (IETRGEKPKEKAK). A Phosphoserine modification is found at Ser177. Basic and acidic residues predominate over residues 218–239 (IQKHGRGLEKSSKSTKSDAPKE). Thr284 is subject to Phosphothreonine. Residues Ser296, Ser297, and Ser298 each carry the phosphoserine modification. The span at 304–314 (AQNASKPSATK) shows a compositional bias: polar residues. An NG domain region spans residues 419-636 (YVVTFCGVNG…NAKAVVAALM (218 aa)). A GTP-binding site is contributed by 425 to 432 (GVNGVGKS). Residue Ser473 is modified to Phosphoserine. 520-524 (DTAGR) contacts GTP. At Thr578 the chain carries Phosphothreonine. Position 588 to 591 (588 to 591 (TKFD)) interacts with GTP.

This sequence belongs to the GTP-binding SRP family. In terms of assembly, heterodimer with SRPRB. Interacts with the signal recognition particle (SRP) complex subunit SRP54.

The protein resides in the endoplasmic reticulum membrane. Functionally, component of the SRP (signal recognition particle) receptor. Ensures, in conjunction with the signal recognition particle, the correct targeting of the nascent secretory proteins to the endoplasmic reticulum membrane system. Forms a guanosine 5'-triphosphate (GTP)-dependent complex with the SRP subunit SRP54. SRP receptor compaction and GTPase rearrangement drive SRP-mediated cotranslational protein translocation into the ER. In Canis lupus familiaris (Dog), this protein is Signal recognition particle receptor subunit alpha.